Here is a 180-residue protein sequence, read N- to C-terminus: Adenine phosphoribosyltransferase (180 aa).

The protein belongs to the purine/pyrimidine phosphoribosyltransferase family. In terms of assembly, homodimer.

The protein resides in the cytoplasm. It catalyses the reaction AMP + diphosphate = 5-phospho-alpha-D-ribose 1-diphosphate + adenine. It participates in purine metabolism; AMP biosynthesis via salvage pathway; AMP from adenine: step 1/1. Catalyzes a salvage reaction resulting in the formation of AMP, that is energically less costly than de novo synthesis. This chain is Adenine phosphoribosyltransferase, found in Marinobacter nauticus (strain ATCC 700491 / DSM 11845 / VT8) (Marinobacter aquaeolei).